We begin with the raw amino-acid sequence, 98 residues long: NADH-ubiquinone oxidoreductase chain 4L (98 aa).

The next 3 helical transmembrane spans lie at 1–21, 29–49, and 61–81; these read MPSTYINILLAFTMALLGLLL, SLLCLEGLMLALFILSTLMAL, and IVLMVFAACEAALGLALLVMV.

Belongs to the complex I subunit 4L family. In terms of assembly, core subunit of respiratory chain NADH dehydrogenase (Complex I) which is composed of 45 different subunits.

The protein localises to the mitochondrion inner membrane. It carries out the reaction a ubiquinone + NADH + 5 H(+)(in) = a ubiquinol + NAD(+) + 4 H(+)(out). Core subunit of the mitochondrial membrane respiratory chain NADH dehydrogenase (Complex I) which catalyzes electron transfer from NADH through the respiratory chain, using ubiquinone as an electron acceptor. Part of the enzyme membrane arm which is embedded in the lipid bilayer and involved in proton translocation. The chain is NADH-ubiquinone oxidoreductase chain 4L (MT-ND4L) from Choloepus didactylus (Southern two-toed sloth).